Reading from the N-terminus, the 160-residue chain is Ribosomal RNA large subunit methyltransferase H (160 aa).

S-adenosyl-L-methionine-binding positions include leucine 76, glycine 108, and 127–132; that span reads LGKMTW.

It belongs to the RNA methyltransferase RlmH family. Homodimer.

It is found in the cytoplasm. The enzyme catalyses pseudouridine(1915) in 23S rRNA + S-adenosyl-L-methionine = N(3)-methylpseudouridine(1915) in 23S rRNA + S-adenosyl-L-homocysteine + H(+). Its function is as follows. Specifically methylates the pseudouridine at position 1915 (m3Psi1915) in 23S rRNA. The polypeptide is Ribosomal RNA large subunit methyltransferase H (Rhizobium etli (strain CIAT 652)).